Consider the following 592-residue polypeptide: Tetrathionate sensor histidine kinase TtrS (592 aa).

Transmembrane regions (helical) follow at residues 11-31 (VLAA…NIGI) and 307-327 (VGGV…VMLL). The region spanning 364-581 (GFAHELNQPL…VVTIHFLHEN (218 aa)) is the Histidine kinase domain. H367 is modified (phosphohistidine; by autocatalysis).

Autophosphorylated.

Its subcellular location is the cell inner membrane. It carries out the reaction ATP + protein L-histidine = ADP + protein N-phospho-L-histidine.. Functionally, member of the two-component regulatory system TtrR/TtrS, which is required for synthesis of tetrathionate reductase. Probably functions as a sensor protein kinase which is autophosphorylated at a histidine residue in response to tetrathionate, and transfers its phosphate group to TtrR. During mice infection, the ability to use tetrathionate as an electron acceptor is a growth advantage for S.typhimurium over the competing microbiota in the lumen of the inflamed gut. This chain is Tetrathionate sensor histidine kinase TtrS (ttrS), found in Salmonella typhimurium (strain LT2 / SGSC1412 / ATCC 700720).